A 101-amino-acid polypeptide reads, in one-letter code: MAKKSSIEKNNRRKKMAKNAAPKRERLKAIIADRSKPMEERFAATLKLAEMPRNSSITRVRNRCELTGRARAVYRKNKLSRIAIRDLGSRGLVPGLVKSSW.

Residues 1–10 are compositionally biased toward basic and acidic residues; the sequence is MAKKSSIEKN. Residues 1–25 are disordered; it reads MAKKSSIEKNNRRKKMAKNAAPKRE.

The protein belongs to the universal ribosomal protein uS14 family. Part of the 30S ribosomal subunit. Contacts proteins S3 and S10.

In terms of biological role, binds 16S rRNA, required for the assembly of 30S particles and may also be responsible for determining the conformation of the 16S rRNA at the A site. The protein is Small ribosomal subunit protein uS14 of Rhodopseudomonas palustris (strain BisA53).